Here is a 137-residue protein sequence, read N- to C-terminus: Holo-[acyl-carrier-protein] synthase (137 aa).

Residues Asp-7 and Glu-58 each contribute to the Mg(2+) site.

The protein belongs to the P-Pant transferase superfamily. AcpS family. Mg(2+) is required as a cofactor.

It localises to the cytoplasm. The enzyme catalyses apo-[ACP] + CoA = holo-[ACP] + adenosine 3',5'-bisphosphate + H(+). Functionally, transfers the 4'-phosphopantetheine moiety from coenzyme A to a Ser of acyl-carrier-protein. This Chloroflexus aurantiacus (strain ATCC 29366 / DSM 635 / J-10-fl) protein is Holo-[acyl-carrier-protein] synthase.